A 377-amino-acid chain; its full sequence is uncharacterized protein (377 aa).

Positions 1 to 25 (MAQQTNVAGQKTEKQRKAPFRADHV) are disordered. The span at 11 to 24 (KTEKQRKAPFRADH) shows a compositional bias: basic and acidic residues.

The protein to B.subtilis YxjG.

This is an uncharacterized protein from Bacillus subtilis (strain 168).